Consider the following 344-residue polypeptide: tRNA N6-adenosine threonylcarbamoyltransferase (344 aa).

Fe cation is bound by residues His-111 and His-115. Substrate contacts are provided by residues 136–140 (LVSGG), Asp-169, Gly-182, and Asn-279. Residue Asp-307 coordinates Fe cation.

Belongs to the KAE1 / TsaD family. Fe(2+) serves as cofactor.

Its subcellular location is the cytoplasm. It catalyses the reaction L-threonylcarbamoyladenylate + adenosine(37) in tRNA = N(6)-L-threonylcarbamoyladenosine(37) in tRNA + AMP + H(+). Required for the formation of a threonylcarbamoyl group on adenosine at position 37 (t(6)A37) in tRNAs that read codons beginning with adenine. Is involved in the transfer of the threonylcarbamoyl moiety of threonylcarbamoyl-AMP (TC-AMP) to the N6 group of A37, together with TsaE and TsaB. TsaD likely plays a direct catalytic role in this reaction. This Mannheimia succiniciproducens (strain KCTC 0769BP / MBEL55E) protein is tRNA N6-adenosine threonylcarbamoyltransferase.